A 410-amino-acid polypeptide reads, in one-letter code: Putative competence-damage inducible protein (410 aa).

Belongs to the CinA family.

This Clostridium beijerinckii (strain ATCC 51743 / NCIMB 8052) (Clostridium acetobutylicum) protein is Putative competence-damage inducible protein.